The primary structure comprises 406 residues: Acetylornithine/succinyldiaminopimelate aminotransferase (406 aa).

Residues 108–109 and F141 contribute to the pyridoxal 5'-phosphate site; that span reads GT. R144 serves as a coordination point for N(2)-acetyl-L-ornithine. Position 226 to 229 (226 to 229) interacts with pyridoxal 5'-phosphate; the sequence is DEVQ. K255 bears the N6-(pyridoxal phosphate)lysine mark. Residue S283 coordinates N(2)-acetyl-L-ornithine. T284 provides a ligand contact to pyridoxal 5'-phosphate.

The protein belongs to the class-III pyridoxal-phosphate-dependent aminotransferase family. ArgD subfamily. Homodimer. Pyridoxal 5'-phosphate is required as a cofactor.

It localises to the cytoplasm. It carries out the reaction N(2)-acetyl-L-ornithine + 2-oxoglutarate = N-acetyl-L-glutamate 5-semialdehyde + L-glutamate. It catalyses the reaction N-succinyl-(2S,6S)-2,6-diaminopimelate + 2-oxoglutarate = (S)-2-succinylamino-6-oxoheptanedioate + L-glutamate. Its pathway is amino-acid biosynthesis; L-arginine biosynthesis; N(2)-acetyl-L-ornithine from L-glutamate: step 4/4. It functions in the pathway amino-acid biosynthesis; L-lysine biosynthesis via DAP pathway; LL-2,6-diaminopimelate from (S)-tetrahydrodipicolinate (succinylase route): step 2/3. Involved in both the arginine and lysine biosynthetic pathways. This chain is Acetylornithine/succinyldiaminopimelate aminotransferase, found in Escherichia coli (strain K12).